We begin with the raw amino-acid sequence, 396 residues long: MASVTFSVPKGFTEFSGLRSSSASLPFGKKLSSDEFVSIVSFQTSAMGSSGGYRKGVTEAKLKVAINGFGRIGRNFLRCWHGRKDSPLDIIAINDTGGVKQASHLLKYDSTLGIFDADVKPSGETAISVDGKIIQVVSNRNPSLLPWKELGIDIVIEGTGVFVDREGAGKHIEAGAKKVIITAPGKGDIPTYVVGVNADAYSHDEPIISNASCTTNCLAPFVKVLDQKFGIIKGTMTTTHSYTGDQRLLDASHRDLRRARAAALNIVPTSTGAAKAVALVLPNLKGKLNGIALRVPTPNVSVVDLVVQVSKKTFAEEVNAAFRDSAEKELKGILDVCDEPLVSVDFRCSDFSTTIDSSLTMVMGDDMVKVIAWYDNEWGYSQRVVDLADIVANNWK.

The N-terminal 60 residues, 1 to 60, are a transit peptide targeting the chloroplast; it reads MASVTFSVPKGFTEFSGLRSSSASLPFGKKLSSDEFVSIVSFQTSAMGSSGGYRKGVTEA. Residues 71-72, Asp95, and Arg140 each bind NADP(+); that span reads RI. Residues 212–214, Thr243, Arg258, 271–272, and Arg294 contribute to the D-glyceraldehyde 3-phosphate site; these read SCT and TG. The Nucleophile role is filled by Cys213. Asn376 lines the NADP(+) pocket.

It belongs to the glyceraldehyde-3-phosphate dehydrogenase family. In terms of assembly, tetramer of either four A chains (GAPDH 2) or two A and two B chains (GAPDH 1). As to expression, expressed in leaves and stems.

Its subcellular location is the plastid. It is found in the chloroplast membrane. The protein resides in the chloroplast stroma. The catalysed reaction is D-glyceraldehyde 3-phosphate + phosphate + NADP(+) = (2R)-3-phospho-glyceroyl phosphate + NADPH + H(+). It functions in the pathway carbohydrate biosynthesis; Calvin cycle. Involved in the photosynthetic reductive pentose phosphate pathway (Calvin-Benson cycle). Catalyzes the reduction of 1,3-diphosphoglycerate by NADPH. In Arabidopsis thaliana (Mouse-ear cress), this protein is Glyceraldehyde-3-phosphate dehydrogenase GAPA1, chloroplastic (GAPA1).